The following is a 332-amino-acid chain: MKLGRAALGLLLLAPSVVQAVEPISLGLALAGVLTGYIYPRLYCLFAECCGQKRSLSREALQKDLDNKLFGQHLAKKIILNAVFGFINNPKPKKPLTLSLHGWTGTGKNFVSKIIAENIYEGGLNSDYVHLFVATLHFPHASNITLYKDQLQLWIRGNVSACARSIFIFDEMDKMHAGLIDAIKPFLDYYDLVDGVSYQKAIFIFLSNAGAERITDVALDFWRSGKQREDIKLKDIEHALSVSVFNNKNSGFWHSSLIDRNLIDYFVPFLPLEYKHLKMCIRVEMQSRGYETNEDIVSRVAEEMTFFPKEERVFSDKGCKTVFTKLDYYYDD.

The first 20 residues, 1–20 (MKLGRAALGLLLLAPSVVQA), serve as a signal peptide directing secretion. The interaction with SNAPIN stretch occupies residues 91–251 (KPKKPLTLSL…VSVFNNKNSG (161 aa)). An ATP-binding site is contributed by 102–109 (GWTGTGKN). N-linked (GlcNAc...) asparagine glycans are attached at residues asparagine 143 and asparagine 158. The segment at 251–332 (GFWHSSLIDR…FTKLDYYYDD (82 aa)) is interaction with KLC1. Positions 312 to 332 (RVFSDKGCKTVFTKLDYYYDD) are interaction with SYNE3.

It belongs to the ClpA/ClpB family. Torsin subfamily. In terms of assembly, homohexamer. Interacts with TOR1B; the interaction may be specific of neural tissues. Interacts (ATP-bound) with TOR1AIP1 and TOR1AIP2; the interactions induce ATPase activity. Interacts with KLHL14; preferentially when ATP-free. Interacts with KLC1 (via TPR repeats); the interaction associates TOR1A with the kinesin oligomeric complex. Interacts with COPS4; the interaction associates TOR1A with the CSN complex. Interacts with SNAPIN; the interaction is direct and associates SNAPIN with the CSN complex. Interacts with STON2. Interacts (ATP-bound) with SYNE3 (via KASH domain); the interaction is required for SYNE3 nuclear envelope localization. Interacts with VIM; the interaction associates TOR1A with the cytoskeleton. Interacts with PLEC. Interacts (ATP-bound) with SLC6A3; regulates SLC6A3 transport to the plasma membrane. In terms of processing, N-glycosylated.

Its subcellular location is the endoplasmic reticulum lumen. The protein resides in the nucleus membrane. The protein localises to the cell projection. It localises to the growth cone. It is found in the cytoplasmic vesicle membrane. Its subcellular location is the cytoplasmic vesicle. The protein resides in the secretory vesicle. The protein localises to the synaptic vesicle. It localises to the cytoplasm. It is found in the cytoskeleton. It catalyses the reaction ATP + H2O = ADP + phosphate + H(+). Its function is as follows. Protein with chaperone functions important for the control of protein folding, processing, stability and localization as well as for the reduction of misfolded protein aggregates. Involved in the regulation of synaptic vesicle recycling, controls STON2 protein stability in collaboration with the COP9 signalosome complex (CSN). In the nucleus, may link the cytoskeleton with the nuclear envelope, this mechanism seems to be crucial for the control of nuclear polarity, cell movement and, specifically in neurons, nuclear envelope integrity. Participates in the cellular trafficking and may regulate the subcellular location of multipass membrane proteins such as the dopamine transporter SLC6A3, leading to the modulation of dopamine neurotransmission. In the endoplasmic reticulum, plays a role in the quality control of protein folding by increasing clearance of misfolded proteins such as SGCE variants or holding them in an intermediate state for proper refolding. May have a redundant function with TOR1B in non-neural tissues. The sequence is that of Torsin-1A (TOR1A) from Macaca fascicularis (Crab-eating macaque).